The following is a 531-amino-acid chain: NADH-quinone oxidoreductase subunit N (531 aa).

A run of 14 helical transmembrane segments spans residues 8-28 (VEYFLLAPMLIVFSVAVAGVL), 41-61 (AQVTLALGGSAVALIAVIVVA), 81-101 (ATLFLQGTVLLVTIMAVVFMA), 146-166 (GATQTELFPLAMLSVGGMMVF), 172-192 (LLTMFVALEVLSLPLYLMCGL), 208-228 (FLLGAFSSAFFLYGVALLYGA), 250-270 (ALAGVALLAVGLLFKVGAVPF), 282-302 (PTPITGFMAAATKVAAFGALL), 318-338 (PVLWAIAILTMTVGTVTAVNQ), 350-370 (VAHVGFILTGVIADNPAGLSA), 372-392 (LFYLVAYSFSTMGAFAIVGLV), 418-438 (IVGVMLSMFLLAFAGIPLTSG), 453-473 (GAVPLVIVGVISSGVAAYFYV), and 500-520 (AAIAVCTVVTVVLGIAPQPVL).

This sequence belongs to the complex I subunit 2 family. NDH-1 is composed of 14 different subunits. Subunits NuoA, H, J, K, L, M, N constitute the membrane sector of the complex.

It is found in the cell membrane. The catalysed reaction is a quinone + NADH + 5 H(+)(in) = a quinol + NAD(+) + 4 H(+)(out). In terms of biological role, NDH-1 shuttles electrons from NADH, via FMN and iron-sulfur (Fe-S) centers, to quinones in the respiratory chain. The immediate electron acceptor for the enzyme in this species is believed to be a menaquinone. Couples the redox reaction to proton translocation (for every two electrons transferred, four hydrogen ions are translocated across the cytoplasmic membrane), and thus conserves the redox energy in a proton gradient. The polypeptide is NADH-quinone oxidoreductase subunit N (Mycobacterium bovis (strain ATCC BAA-935 / AF2122/97)).